A 258-amino-acid chain; its full sequence is Indole-3-glycerol phosphate synthase (258 aa).

This sequence belongs to the TrpC family.

The catalysed reaction is 1-(2-carboxyphenylamino)-1-deoxy-D-ribulose 5-phosphate + H(+) = (1S,2R)-1-C-(indol-3-yl)glycerol 3-phosphate + CO2 + H2O. It functions in the pathway amino-acid biosynthesis; L-tryptophan biosynthesis; L-tryptophan from chorismate: step 4/5. The protein is Indole-3-glycerol phosphate synthase of Campylobacter fetus subsp. fetus (strain 82-40).